The chain runs to 493 residues: Neisserial heparin binding antigen (493 aa).

An N-terminal signal peptide occupies residues 1-22 (MKEMMMFKRSVIAMACIFALSA). C23 is lipidated: N-palmitoyl cysteine. A lipid anchor (S-diacylglycerol cysteine) is attached at C23. The interval 27 to 206 (GGGSPDVKSA…NPAPANGGSN (180 aa)) is disordered. The span at 48 to 58 (SEKETEAKEDA) shows a compositional bias: basic and acidic residues. The span at 59-75 (PQAGSQGQGAPSAQGSQ) shows a compositional bias: low complexity. 2 stretches are compositionally biased toward polar residues: residues 106 to 123 (DMPQ…NHTP) and 132 to 147 (MENQ…QPAN). Residues 165-188 (AGGQNAGNTAAQGANQAGNNQAAG) are compositionally biased toward low complexity. An Arg-rich motif motif is present at residues 301–311 (RFRRSARSRRS).

It belongs to the NHBA family. The C-terminal beta-barrel forms a monomer. In terms of processing, cleaved in vivo by the Neisserial phase-variable autotransporter/serine protease NalP to give 2 fragments. The N-terminus remains in the cell outer membrane while the C-terminus (beginning on Ser-298) is soluble; this soluble fragment is called C2. Cleaved in vitro by human lactoferrin (LTF, between Arg-310 and Ser-311), this fragment is called C1. Recombinant and cell surface protein is cleaved by human saliva kallikrein (KLK1) between Ser-308 and Arg-309; in saliva kallikrein is more active on NHBA than lactoferrin. Human plasma kallikrein (KLKB1) cleaves in a similar manner to KLK1.

It is found in the cell outer membrane. A major human immunogenic protein detected in patients recovering from meningitidis, where it induces bactericidal antibodies. Binds human cells, heparin and heparan sulfate proteoglycan in vitro via the Arg-rich motif. Heparin-binding to this protein protects bacteria against killing by bactericidal antibodies (serum killing). The bacteria binds a number of human extracellular sialyated and/or sulfated glycans via this protein, including chondroitin sulfate, heparin and ganglioside GT3. Whole protein binds DNA. Its function is as follows. Plays a role in extracellular-DNA (eDNA) mediated biofilm formation. In some strains (including cc32 strain H44/76 but not cc11 strain B16B6) eDNA stimulates biofilm formation. When NHBA is not processed by NalP, biofilm formation increases. This is probably because the number of positively charged, NHBA- and IgA-derived DNA-binding peptides on the cell surface rises, resulting in increased DNA-binding peptides and increased biofilm formation. This chain is Neisserial heparin binding antigen, found in Neisseria meningitidis serogroup B / serotype 15 (strain H44/76).